The following is a 248-amino-acid chain: MILLISDLHLEQDRPDITRAFLDLLAGRAREAEALYILGDFFEVWIGDDAMSPFQLSICKALRALSDSGTRIFLMHGNRDFMIGKGFCKAAGCTLLSDPSVVQLNGERVLLMHGDSLCTRDEGYIRMRRYLRHPLTLFILRHLPLGTRHKLARKLRNESRAQTRMKANDIVDVTPDEVPRIMQQFGVRTLVHGHTHRPAIHKLQIGDQAARRIVLGDWDRQGWVLQVDEQGFSLNSFDFVPETTALLN.

Mn(2+) is bound by residues Asp-7, His-9, Asp-40, Asn-78, and His-113. Residue 78-79 participates in substrate binding; that stretch reads NR. The substrate site is built by Asp-121, Ser-159, Thr-163, Lys-166, and His-194. Residues His-194 and His-196 each coordinate Mn(2+).

Belongs to the LpxH family. It depends on Mn(2+) as a cofactor.

The protein resides in the cell inner membrane. It catalyses the reaction UDP-2-N,3-O-bis[(3R)-3-hydroxytetradecanoyl]-alpha-D-glucosamine + H2O = 2-N,3-O-bis[(3R)-3-hydroxytetradecanoyl]-alpha-D-glucosaminyl 1-phosphate + UMP + 2 H(+). The protein operates within glycolipid biosynthesis; lipid IV(A) biosynthesis; lipid IV(A) from (3R)-3-hydroxytetradecanoyl-[acyl-carrier-protein] and UDP-N-acetyl-alpha-D-glucosamine: step 4/6. In terms of biological role, hydrolyzes the pyrophosphate bond of UDP-2,3-diacylglucosamine to yield 2,3-diacylglucosamine 1-phosphate (lipid X) and UMP by catalyzing the attack of water at the alpha-P atom. Involved in the biosynthesis of lipid A, a phosphorylated glycolipid that anchors the lipopolysaccharide to the outer membrane of the cell. The chain is UDP-2,3-diacylglucosamine hydrolase from Pseudomonas savastanoi pv. phaseolicola (strain 1448A / Race 6) (Pseudomonas syringae pv. phaseolicola (strain 1448A / Race 6)).